The chain runs to 276 residues: Putative pyridoxine kinase (276 aa).

Asn-139 provides a ligand contact to ATP. Glu-142 is a binding site for Mg(2+). ATP contacts are provided by residues 176–180 (KGGKA), Asp-188, Gly-213, and Lys-238.

The protein belongs to the ThiD family.

The catalysed reaction is pyridoxal + ATP = pyridoxal 5'-phosphate + ADP + H(+). Its function is as follows. Phosphorylates B6 vitamers; functions in a salvage pathway. Uses pyridoxal, pyridoxine, and pyridoxamine as substrates. The polypeptide is Putative pyridoxine kinase (pdxK) (Staphylococcus epidermidis (strain ATCC 12228 / FDA PCI 1200)).